The primary structure comprises 283 residues: 4-hydroxy-tetrahydrodipicolinate synthase (283 aa).

Residue Thr46 coordinates pyruvate. The Proton donor/acceptor role is filled by Tyr134. The active-site Schiff-base intermediate with substrate is Lys162. Ile208 contributes to the pyruvate binding site.

This sequence belongs to the DapA family. Homotetramer; dimer of dimers.

The protein resides in the cytoplasm. It catalyses the reaction L-aspartate 4-semialdehyde + pyruvate = (2S,4S)-4-hydroxy-2,3,4,5-tetrahydrodipicolinate + H2O + H(+). It functions in the pathway amino-acid biosynthesis; L-lysine biosynthesis via DAP pathway; (S)-tetrahydrodipicolinate from L-aspartate: step 3/4. Functionally, catalyzes the condensation of (S)-aspartate-beta-semialdehyde [(S)-ASA] and pyruvate to 4-hydroxy-tetrahydrodipicolinate (HTPA). The protein is 4-hydroxy-tetrahydrodipicolinate synthase of Methanothermobacter thermautotrophicus (strain ATCC 29096 / DSM 1053 / JCM 10044 / NBRC 100330 / Delta H) (Methanobacterium thermoautotrophicum).